A 217-amino-acid polypeptide reads, in one-letter code: Large ribosomal subunit protein uL3 (217 aa).

Residues 135–154 (ATHGNSLSHRAPGSIGQCQT) are disordered. At Q153 the chain carries N5-methylglutamine.

Belongs to the universal ribosomal protein uL3 family. In terms of assembly, part of the 50S ribosomal subunit. Forms a cluster with proteins L14 and L19. Post-translationally, methylated by PrmB.

Functionally, one of the primary rRNA binding proteins, it binds directly near the 3'-end of the 23S rRNA, where it nucleates assembly of the 50S subunit. The chain is Large ribosomal subunit protein uL3 from Coxiella burnetii (strain CbuG_Q212) (Coxiella burnetii (strain Q212)).